Reading from the N-terminus, the 109-residue chain is Small ribosomal subunit protein bS18c (109 aa).

Positions 82-109 (GFERSESTPRTNALKPRNKNKQNNQTQF) are disordered.

The protein belongs to the bacterial ribosomal protein bS18 family. In terms of assembly, part of the 30S ribosomal subunit.

Its subcellular location is the plastid. The polypeptide is Small ribosomal subunit protein bS18c (Cuscuta reflexa (Southern Asian dodder)).